A 626-amino-acid chain; its full sequence is Janus kinase and microtubule-interacting protein 1 (626 aa).

Residues 1 to 25 are disordered; sequence MSKKGRSKGDKPEAETDSVQMANEE. A mediates association with microtubules region spans residues 1 to 365; the sequence is MSKKGRSKGD…KLKSLTRENV (365 aa). Coiled coils occupy residues 13-255 and 284-413; these read EAET…EAER and ERDV…DDLS. Residues 365-626 are mediates interaction with TYK2 and GABBR1; the sequence is VEMKEKLSAQ…ILFEPKLKFM (262 aa). At serine 382 the chain carries Phosphoserine. Residues 452 to 461 show a composition bias toward polar residues; the sequence is ETLSETSYNT. The tract at residues 452–481 is disordered; the sequence is ETLSETSYNTDRTDRTPATPEEDLDETTTR. The residue at position 470 (threonine 470) is a Phosphothreonine. Residues 490-604 adopt a coiled-coil conformation; it reads QLTREYQALQ…EFRVLELEVR (115 aa).

The protein belongs to the JAKMIP family. In terms of assembly, homodimer. Interacts with JAK1 and TYK2. Forms a complex with GABBR1 and KIF5B/kinesin-1. Phosphorylated.

It is found in the cytoplasm. The protein resides in the cytoskeleton. The protein localises to the membrane. Associates with microtubules and may play a role in the microtubule-dependent transport of the GABA-B receptor. May play a role in JAK1 signaling and regulate microtubule cytoskeleton rearrangements. The sequence is that of Janus kinase and microtubule-interacting protein 1 (Jakmip1) from Mus musculus (Mouse).